A 334-amino-acid polypeptide reads, in one-letter code: Ribosomal RNA small subunit methyltransferase C (334 aa).

Belongs to the methyltransferase superfamily. RsmC family. In terms of assembly, monomer.

The protein localises to the cytoplasm. The catalysed reaction is guanosine(1207) in 16S rRNA + S-adenosyl-L-methionine = N(2)-methylguanosine(1207) in 16S rRNA + S-adenosyl-L-homocysteine + H(+). Its function is as follows. Specifically methylates the guanine in position 1207 of 16S rRNA in the 30S particle. This chain is Ribosomal RNA small subunit methyltransferase C, found in Idiomarina loihiensis (strain ATCC BAA-735 / DSM 15497 / L2-TR).